Here is a 115-residue protein sequence, read N- to C-terminus: Large ribosomal subunit protein bL20c (115 aa).

Belongs to the bacterial ribosomal protein bL20 family.

It is found in the plastid. It localises to the chloroplast. Functionally, binds directly to 23S ribosomal RNA and is necessary for the in vitro assembly process of the 50S ribosomal subunit. It is not involved in the protein synthesizing functions of that subunit. In Cycas taitungensis (Prince sago), this protein is Large ribosomal subunit protein bL20c.